The primary structure comprises 355 residues: Serine acetyltransferase 4 (355 aa).

The protein belongs to the transferase hexapeptide repeat family. As to quaternary structure, homomultimer. Localized in vascular tissues, particularly in phloem.

Its subcellular location is the cytoplasm. The catalysed reaction is L-serine + acetyl-CoA = O-acetyl-L-serine + CoA. It functions in the pathway amino-acid biosynthesis; L-cysteine biosynthesis; L-cysteine from L-serine: step 1/2. With respect to regulation, feedback inhibitions by L-Ser and acetyl-CoA. This chain is Serine acetyltransferase 4, found in Arabidopsis thaliana (Mouse-ear cress).